The following is a 658-amino-acid chain: Ubiquilin-3 (658 aa).

Positions 22-96 constitute a Ubiquitin-like domain; it reads IRVTVKTPKD…VHLVIKMQRR (75 aa). Residues 194 to 233 enclose the STI1 domain; sequence NPHMQHLIQQNPEIGHILNNPEIMRQTMEFLRNPSMMQEM. The span at 280–291 shows a compositional bias: low complexity; the sequence is TATTASTTTTSS. 2 disordered regions span residues 280-336 and 362-478; these read TATT…RNRL and YLQG…PESP. The segment covering 312-323 has biased composition (gly residues); it reads VSGGRQGRGGRQ. Composition is skewed to polar residues over residues 362-379, 389-400, and 438-469; these read YLQG…SPLS, SSPKSGSGQSLP, and TGPS…SLMS. Residues 614–658 form the UBA domain; it reads QLEAHFRVQLEQLRAMGFLNLEANLQALIATEGDVDAAVEKLRKS.

As to expression, testis-specific (at protein level).

The protein is Ubiquilin-3 (Ubqln3) of Mus musculus (Mouse).